Here is a 172-residue protein sequence, read N- to C-terminus: Ribosome maturation factor RimM (172 aa).

The PRC barrel domain maps to 96 to 168 (EGEFYYHQII…RVDVELMEGL (73 aa)).

Belongs to the RimM family. In terms of assembly, binds ribosomal protein uS19.

It localises to the cytoplasm. Its function is as follows. An accessory protein needed during the final step in the assembly of 30S ribosomal subunit, possibly for assembly of the head region. Essential for efficient processing of 16S rRNA. May be needed both before and after RbfA during the maturation of 16S rRNA. It has affinity for free ribosomal 30S subunits but not for 70S ribosomes. The protein is Ribosome maturation factor RimM of Streptococcus pyogenes serotype M1.